Here is a 163-residue protein sequence, read N- to C-terminus: Nucleotide-binding protein GWCH70_0711 (163 aa).

Belongs to the YajQ family.

In terms of biological role, nucleotide-binding protein. This is Nucleotide-binding protein GWCH70_0711 from Geobacillus sp. (strain WCH70).